We begin with the raw amino-acid sequence, 59 residues long: Chromatin protein Cren7 (59 aa).

This sequence belongs to the Cren7 family. Monomer. Methylated at multiple sites, to varying extents.

The protein resides in the chromosome. It localises to the cytoplasm. Functionally, a chromatin protein, binds double-stranded DNA without sequence specificity. Constrains negative DNA supercoils. The chain is Chromatin protein Cren7 from Pyrobaculum aerophilum (strain ATCC 51768 / DSM 7523 / JCM 9630 / CIP 104966 / NBRC 100827 / IM2).